Consider the following 320-residue polypeptide: Ferrochelatase (320 aa).

Fe cation-binding residues include histidine 194 and glutamate 275.

This sequence belongs to the ferrochelatase family. In terms of assembly, monomer.

The protein resides in the cytoplasm. It catalyses the reaction heme b + 2 H(+) = protoporphyrin IX + Fe(2+). It functions in the pathway porphyrin-containing compound metabolism; protoheme biosynthesis; protoheme from protoporphyrin-IX: step 1/1. In terms of biological role, catalyzes the ferrous insertion into protoporphyrin IX. In Shigella sonnei (strain Ss046), this protein is Ferrochelatase.